The chain runs to 344 residues: Methionine import ATP-binding protein MetN (344 aa).

Residues 2-241 enclose the ABC transporter domain; it reads IELQGLSQRF…PQHEVTRAMI (240 aa). An ATP-binding site is contributed by 38–45; the sequence is GRSGAGKS.

This sequence belongs to the ABC transporter superfamily. Methionine importer (TC 3.A.1.24) family. The complex is composed of two ATP-binding proteins (MetN), two transmembrane proteins (MetI) and a solute-binding protein (MetQ).

It is found in the cell inner membrane. It catalyses the reaction L-methionine(out) + ATP + H2O = L-methionine(in) + ADP + phosphate + H(+). The enzyme catalyses D-methionine(out) + ATP + H2O = D-methionine(in) + ADP + phosphate + H(+). In terms of biological role, part of the ABC transporter complex MetNIQ involved in methionine import. Responsible for energy coupling to the transport system. This chain is Methionine import ATP-binding protein MetN, found in Cupriavidus pinatubonensis (strain JMP 134 / LMG 1197) (Cupriavidus necator (strain JMP 134)).